The chain runs to 280 residues: 4-deoxy-L-threo-5-hexosulose-uronate ketol-isomerase (280 aa).

Positions 198, 200, 205, and 247 each coordinate Zn(2+).

It belongs to the KduI family. Zn(2+) is required as a cofactor.

The enzyme catalyses 5-dehydro-4-deoxy-D-glucuronate = 3-deoxy-D-glycero-2,5-hexodiulosonate. Its pathway is glycan metabolism; pectin degradation; 2-dehydro-3-deoxy-D-gluconate from pectin: step 4/5. Its function is as follows. Catalyzes the isomerization of 5-dehydro-4-deoxy-D-glucuronate to 3-deoxy-D-glycero-2,5-hexodiulosonate. The protein is 4-deoxy-L-threo-5-hexosulose-uronate ketol-isomerase of Bacteroides fragilis (strain YCH46).